Here is a 100-residue protein sequence, read N- to C-terminus: Small ribosomal subunit protein uS14c (100 aa).

It belongs to the universal ribosomal protein uS14 family. Part of the 30S ribosomal subunit.

Its subcellular location is the plastid. It localises to the chloroplast. In terms of biological role, binds 16S rRNA, required for the assembly of 30S particles. This Trieres chinensis (Marine centric diatom) protein is Small ribosomal subunit protein uS14c.